The primary structure comprises 207 residues: Ribosomal RNA small subunit methyltransferase G (207 aa).

S-adenosyl-L-methionine contacts are provided by residues Gly-76, Gln-81, 127 to 128 (VE), and Arg-141.

Belongs to the methyltransferase superfamily. RNA methyltransferase RsmG family.

The protein resides in the cytoplasm. The catalysed reaction is guanosine(527) in 16S rRNA + S-adenosyl-L-methionine = N(7)-methylguanosine(527) in 16S rRNA + S-adenosyl-L-homocysteine. Its function is as follows. Specifically methylates the N7 position of guanine in position 527 of 16S rRNA. This chain is Ribosomal RNA small subunit methyltransferase G, found in Neisseria meningitidis serogroup C / serotype 2a (strain ATCC 700532 / DSM 15464 / FAM18).